The sequence spans 429 residues: Serine hydroxymethyltransferase (429 aa).

Residues leucine 126 and 130–132 each bind (6S)-5,6,7,8-tetrahydrofolate; that span reads GHL. At lysine 235 the chain carries N6-(pyridoxal phosphate)lysine. 359–361 is a binding site for (6S)-5,6,7,8-tetrahydrofolate; that stretch reads SPF.

It belongs to the SHMT family. Homodimer. Pyridoxal 5'-phosphate serves as cofactor.

The protein localises to the cytoplasm. The enzyme catalyses (6R)-5,10-methylene-5,6,7,8-tetrahydrofolate + glycine + H2O = (6S)-5,6,7,8-tetrahydrofolate + L-serine. It functions in the pathway one-carbon metabolism; tetrahydrofolate interconversion. It participates in amino-acid biosynthesis; glycine biosynthesis; glycine from L-serine: step 1/1. Its function is as follows. Catalyzes the reversible interconversion of serine and glycine with tetrahydrofolate (THF) serving as the one-carbon carrier. This reaction serves as the major source of one-carbon groups required for the biosynthesis of purines, thymidylate, methionine, and other important biomolecules. Also exhibits THF-independent aldolase activity toward beta-hydroxyamino acids, producing glycine and aldehydes, via a retro-aldol mechanism. This chain is Serine hydroxymethyltransferase, found in Synechococcus sp. (strain CC9902).